The following is a 278-amino-acid chain: HAUS augmin-like complex subunit 1 (278 aa).

Coiled-coil stretches lie at residues 49-79 (RDVY…LMES), 124-177 (SDLF…KVDN), and 249-277 (SLAQ…DMME).

Belongs to the HAUS1 family. Component of the HAUS augmin-like complex. The complex interacts with the gamma-tubulin ring complex and this interaction is required for spindle assembly. Associates with microtubules. The interaction with microtubules is strong during mitosis, while it is weak or absent during interphase. It is unclear whether this interaction is direct or indirect. Interacts with EML3 (phosphorylated at 'Thr-881'). In terms of tissue distribution, widely expressed. Expressed in pancreas, kidney, skeletal muscle, liver and heart. Weakly expressed in lung, brain and placenta.

The protein resides in the cytoplasm. It is found in the cytoskeleton. The protein localises to the microtubule organizing center. Its subcellular location is the centrosome. It localises to the spindle. The protein resides in the spindle pole. Functionally, contributes to mitotic spindle assembly, maintenance of centrosome integrity and completion of cytokinesis as part of the HAUS augmin-like complex. In Homo sapiens (Human), this protein is HAUS augmin-like complex subunit 1 (HAUS1).